The following is a 546-amino-acid chain: MYKHRYFHFFFFFFFFLVSTKIIRSFTFLNNNTNLSNPVYFKKKANMVYDLIVIGGGSGGMAAARRAARHNAKVALVEKSRLGGTCVNVGCVPKKIMFNAASVHDILENSRHYGFDTKFSFNLPLLVERRDKYIQRLNNIYRQNLSKDKVDLYEGTASFLSENRILIKGTKDNNNKDNGPLNEEILEGRNILIAVGNKPVFPPVKGIENTISSDEFFNIKESKKIGIVGSGYIAVELINVIKRLGIDSYIFARGNRILRKFDESVINVLENDMKKNNINIVTFADVVEIKKVSDKNLSIHLSDGRIYEHFDHVIYCVGRSPDTENLNLEKLNVETNNNYIVVDENQRTSVNNIYAVGDCCMVKKSKEIEDLNLLKLYNEETYLNKKENVTEDIFYNVQLTPVAINAGRLLADRLFLKKTRKTNYKLIPTVIFSHPPIGTIGLSEEAAIQIYGKENVKIYESKFTNLFFSVYDIEPELKEKTYLKLVCVGKDELIKGLHIIGLNADEIVQGFAVALKMNATKKDFDETIPIHPTAAEEFLTLQPWMK.

An apicoplast-targeting transit peptide spans 2 to 46; that stretch reads YKHRYFHFFFFFFFFLVSTKIIRSFTFLNNNTNLSNPVYFKKKAN. Ser58 and Gly59 together coordinate FAD. Ser58 is a glutathione binding site. Arg65 contributes to the glutathione binding site. Residues Glu78, Thr85, Cys86, and Lys94 each coordinate FAD. Cys86 and Cys91 form a disulfide bridge. Tyr141 serves as a coordination point for glutathione. Ala157 contacts FAD. NADP(+) is bound by residues Ile233, Glu236, Arg253, Arg259, and Gly318. 2 residues coordinate FAD: Asp358 and Thr400. Arg408 lines the glutathione pocket. Val430 is an NADP(+) binding site. Residue His531 coordinates FAD. The Proton acceptor role is filled by His531.

The protein belongs to the class-I pyridine nucleotide-disulfide oxidoreductase family. In terms of assembly, homodimer. FAD is required as a cofactor.

Its subcellular location is the cytoplasm. It localises to the plastid. The protein localises to the apicoplast. The enzyme catalyses 2 glutathione + NADP(+) = glutathione disulfide + NADPH + H(+). Catalyzes the reduction of glutathione disulfide (GSSG) to reduced glutathione (GSH). Constitutes the major mechanism to maintain a high GSH:GSSG ratio in the cytosol. The chain is Glutathione reductase from Plasmodium falciparum (isolate 3D7).